The following is a 216-amino-acid chain: Ras-related protein Rab-5C (216 aa).

Ser-30, Ala-31, Gly-33, Lys-34, Ser-35, Ser-36, His-47, Glu-48, Thr-53, and Gly-79 together coordinate GTP. Residue Ser-35 participates in Mg(2+) binding. Short sequence motifs (switch) lie at residues 45–57 and 78–94; these read QFHE…IGAA and AGQE…YRGA. A Mg(2+)-binding site is contributed by Thr-53. Ser-85 is modified (phosphoserine). GTP-binding residues include Asn-134, Lys-135, Asp-137, Ala-165, and Lys-166. The segment at 185 to 216 is disordered; sequence NEPQNAAGAPSRNRGVDLQENSPASRSQCCSN. Residues 203-216 show a composition bias toward polar residues; the sequence is QENSPASRSQCCSN. Residues Cys-213 and Cys-214 are each lipidated (S-geranylgeranyl cysteine).

It belongs to the small GTPase superfamily. Rab family. As to quaternary structure, interacts with EEA1 and INCA1. Interacts with GDI1, GDI2, CHML and CHM; phosphorylation at Ser-85 disrupts this interaction. Requires Mg(2+) as cofactor. Phosphorylation of Ser-85 in the switch II region by LRRK2 prevents the association of RAB regulatory proteins, including CHM, CHML and RAB GDP dissociation inhibitors GDI1 and GDI2.

It is found in the cell membrane. The protein resides in the early endosome membrane. It localises to the melanosome. It carries out the reaction GTP + H2O = GDP + phosphate + H(+). Its activity is regulated as follows. Regulated by guanine nucleotide exchange factors (GEFs) which promote the exchange of bound GDP for free GTP. Regulated by GTPase activating proteins (GAPs) which increase the GTP hydrolysis activity. Inhibited by GDP dissociation inhibitors (GDIs). In terms of biological role, the small GTPases Rab are key regulators of intracellular membrane trafficking, from the formation of transport vesicles to their fusion with membranes. Rabs cycle between an inactive GDP-bound form and an active GTP-bound form that is able to recruit to membranes different sets of downstream effectors directly responsible for vesicle formation, movement, tethering and fusion. This Canis lupus familiaris (Dog) protein is Ras-related protein Rab-5C (RAB5C).